We begin with the raw amino-acid sequence, 189 residues long: Chitin synthase 2 (189 aa).

This sequence belongs to the chitin synthase family. Class II subfamily.

The protein localises to the cell membrane. The catalysed reaction is [(1-&gt;4)-N-acetyl-beta-D-glucosaminyl](n) + UDP-N-acetyl-alpha-D-glucosamine = [(1-&gt;4)-N-acetyl-beta-D-glucosaminyl](n+1) + UDP + H(+). Its function is as follows. Polymerizes chitin, a structural polymer of the cell wall and septum, by transferring the sugar moiety of UDP-GlcNAc to the non-reducing end of the growing chitin polymer. This chain is Chitin synthase 2 (CHS2), found in Exophiala exophialae (Black yeast-like fungus).